The sequence spans 65 residues: Large ribosomal subunit protein uL30 (65 aa).

This sequence belongs to the universal ribosomal protein uL30 family. As to quaternary structure, part of the 50S ribosomal subunit.

The chain is Large ribosomal subunit protein uL30 from Methylobacillus flagellatus (strain ATCC 51484 / DSM 6875 / VKM B-1610 / KT).